The chain runs to 210 residues: Large ribosomal subunit protein uL4 (210 aa).

Residues 46-96 (QGNASTKTRAEVRGGGRKPWRQKGTGRARAGSNRSPLWRGGGVIFGPKPRD) form a disordered region. Positions 60-71 (GGRKPWRQKGTG) are enriched in basic residues.

It belongs to the universal ribosomal protein uL4 family. In terms of assembly, part of the 50S ribosomal subunit.

One of the primary rRNA binding proteins, this protein initially binds near the 5'-end of the 23S rRNA. It is important during the early stages of 50S assembly. It makes multiple contacts with different domains of the 23S rRNA in the assembled 50S subunit and ribosome. In terms of biological role, forms part of the polypeptide exit tunnel. This chain is Large ribosomal subunit protein uL4, found in Gloeothece citriformis (strain PCC 7424) (Cyanothece sp. (strain PCC 7424)).